The primary structure comprises 925 residues: Antiviral innate immune response receptor RIG-I (925 aa).

CARD domains are found at residues 1 to 87 (MTTE…GLYE) and 92 to 172 (WDFK…KTLK). At Ser-8 the chain carries (Microbial infection) Phosphoserine. Phosphoserine is present on Ser-8. Residues Lys-48, Lys-96, Lys-154, and Lys-164 each participate in a glycyl lysine isopeptide (Lys-Gly) (interchain with G-Cter in ubiquitin) cross-link. Thr-170 carries the phosphothreonine modification. Glycyl lysine isopeptide (Lys-Gly) (interchain with G-Cter in ubiquitin) cross-links involve residues Lys-172, Lys-181, Lys-193, and Lys-203. Positions 218–925 (ECQNLSENSC…IPFDPAEMSK (708 aa)) are interaction with ZC3HAV1. The Helicase ATP-binding domain maps to 251–430 (ALPAMKGKNT…DEALDYICKL (180 aa)). Residue 264 to 271 (APTGCGKT) coordinates ATP. The DECH box motif lies at 372-375 (DECH). (Microbial infection) Deamidated asparagine; by herpes simplex virus 1/HHV-1 UL37 is present on residues Asn-495 and Asn-549. The region spanning 610-776 (KLEDLCFILQ…RLQTWDEAVF (167 aa)) is the Helicase C-terminal domain. The tract at residues 735 to 925 (GSKCFLLTSN…IPFDPAEMSK (191 aa)) is mediates interaction with RNF135. Thr-770 is subject to Phosphothreonine; by CK2. The RLR CTR domain maps to 794–925 (QEKPKPVPDK…IPFDPAEMSK (132 aa)). Cys-810 serves as a coordination point for Zn(2+). A Glycyl lysine isopeptide (Lys-Gly) (interchain with G-Cter in ubiquitin) cross-link involves residue Lys-812. A Zn(2+)-binding site is contributed by Cys-813. Residues Ser-854 and Ser-855 each carry the phosphoserine; by CK2 modification. Position 858 is an N6-acetyllysine (Lys-858). Zn(2+)-binding residues include Cys-864 and Cys-869. Lys-909 carries the post-translational modification N6-acetyllysine.

It belongs to the helicase family. RLR subfamily. In terms of assembly, monomer; maintained as a monomer in an autoinhibited state. Upon binding of viral RNAs and conformational shift, homooligomerizes and forms filaments on these molecules. Interacts (via tandem CARD domain) with MAVS/IPS1 promoting its filamentation. Interacts with DHX58/LGP2, IKBKE, TBK1 and STING1. Interacts (via CARD domain) with TRIM25 (via SPRY domain). Interacts (double-stranded RNA-bound oligomeric form) with RNF135 (homodimer); involved in RNA length-dependent activation of the RIG-I signaling pathway. Interacts with CYLD. Interacts with NLRC5; blocks the interaction of MAVS/IPS1 to RIGI. Interacts with SRC. Interacts with DDX60. Interacts with isoform 2 of ZC3HAV1 (via zinc-fingers) in an RNA-dependent manner. Interacts (via tandem CARD domain) with SEC14L1; the interaction is direct and impairs the interaction of RIGI with MAVS/IPS1. Interacts with VCP/p97; interaction is direct and allows the recruitment of RNF125 and subsequent ubiquitination and degradation. Interacts with NOP53; may regulate RIGI through USP15-mediated 'Lys-63'-linked deubiquitination. Interacts with SIGLEC10, CBL and PTPN11; within a negative feedback loop leading to RIGI degradation. Interacts with LRRC25. Interacts with ZCCHC3; leading to activation of RIGI. Interacts with RNF123. Interacts with UBE2D3 and UBE2N; E2 ubiquitin ligases involved in RNF135-mediated ubiquitination of RIGI and activation of the RIG-I signaling pathway. Interacts with IFIT3. Interacts with DDX3X. Interacts with RTN3. Interacts with ARL16; this interaction is GTP-dependent and induced upon viral infection; this interaction suppresses the RNA sensing activity of RIGI. Interacts with DHX16; this interaction enhances RIGI-mediated antiviral response. Interacts with IRGM; promoting RIGI degradation. Interacts with IFI6; this interaction inhibits RIGI activation. Interacts with ECSIT; this interaction bridges RIGI to the MAVS complex at the mitochondrion. Interacts with YWHAE; this interaction drives RIGI at the mitochondrion. (Microbial infection) Interacts with protein Z of Guanarito virus, Machupo virus, Junin arenavirus and Sabia virus. This interaction disrupts its interaction with MAVS/IPS1, impeding downstream IRF3 and NF-kappa-B activation and resulting in decreased IFN-beta induction. As to quaternary structure, (Microbial infection) Interacts (via CARD domain) with Human respiratory syncytial virus A non-structural protein 2 (NS2) and this interaction disrupts its interaction with MAVS/IPS1, impeding downstream IRF3 activation. In terms of assembly, (Microbial infection) Interacts with Rotavirus A non-structural protein 1 (NSP1) and this interaction induces down-regulation of RIGI. (Microbial infection) Interacts with paramyxoviruses (Sendai virus, Nipah virus, Measles virus and Parainfluenza virus 5) protein V; this interaction inhibits TRIM25-mediated ubiquitination of RIG-I and prevents downstream RIG-I signaling thereby inhibiting the IFN responses. As to quaternary structure, (Microbial infection) Interacts with herpes simplex virus 1 protein US11; this interaction prevents the interaction of MAVS/IPS1 to RIGI. In terms of assembly, (Microbial infection) Interacts with herpes simplex virus 1 protein UL37; this interaction deaminates RIGI and inhibits its activation. (Microbial infection) Interacts with Severe fever with thrombocytopenia virus (SFTSV) NSs; this interaction this interaction sequesters RIGI in NSs-induced cytoplasmic inclusion bodies thereby inhibiting the IFN responses. Post-translationally, phosphorylated in resting cells and dephosphorylated in RNA virus-infected cells. Phosphorylation at Thr-770, Ser-854 and Ser-855 results in inhibition of its activity while dephosphorylation at these sites results in its activation. Ubiquitinated. 'Lys-63' ubiquitination by RNF135, which occurs after RNA-binding and homodimerization, releases the autoinhibition of the CARD domains by the RLR CTR domain, an essential step in the activation of the RIG-I signaling pathway. Lys-172 is the critical site of ubiquitination for MAVS/IPS1 binding and to induce anti-viral signal transduction. Lys-154, Lys-164 and Lys-172 are shared sites for RNF135-mediated and TRIM4-mediated ubiquitination. Also undergoes 'Lys-48' ubiquitination at Lys-181 by RNF125 that leads to proteasomal degradation. 'Lys-48' ubiquitination follows viral infection and is enhanced by 'Lys-63'-linked ubiquitination of the CARD domains that promotes interaction with VCP/p97 and subsequent recruitment of RNF125. Within a negative feedback loop involving SIGLEC10 and PTPN11, 'Lys-48' ubiquitination at Lys-812 by CBL also elicits the proteasomal degradation of RIGI. Deubiquitinated by CYLD, a protease that selectively cleaves 'Lys-63'-linked ubiquitin chains. Also probably deubiquitinated by USP17L2/USP17 that cleaves 'Lys-48'- and 'Lys-63'-linked ubiquitin chains and positively regulates the receptor. Ubiquitinated by TRIM40 via 'Lys-48'-linked ubiquitination; leading to proteasomal degradation. Deubiquitinated by USP27X that cleaves 'Lys-63'-linked ubiquitin chains and inhibits the innate immune receptor activity. Deubiquitinated by USP3 that also cleaves 'Lys-63'-linked ubiquitin chains and inhibits the innate immune receptor activity. Undergoes 'Lys-48'-linked ubiquitination catalyzed by MARCHF5 at Lys-193 and Lys-203, leading to proteasomal degradation. In terms of processing, phosphorylated at Ser-8 and Thr-170; these phosphorylations suppresse the TRIM25-mediated 'Lys-63'-linked ubiquitination of RIG-I and thereby prevents RIG-I downstream signaling. Dephosphorylated by phosphatases PPP1CA/PPP1CC; this step is essential to activate RIGI and initiate downstream signaling. Post-translationally, ISGylated. Conjugated to ubiquitin-like protein ISG15 upon IFN-beta stimulation. ISGylation negatively regulates its function in antiviral signaling response. Sumoylated, probably by MUL1; inhibiting its polyubiquitination. In terms of processing, acetylated in response to RNA virus infection. Deacetylated by HDAC6 in the presence of viral mRNAs which is required for detection of viral RNA by RIGI. Post-translationally, (Microbial infection) Deamidated on Asn-495 and Asn-549 by herpes simplex virus 1 protein UL37. These modifications eliminate RIGI detection of viral RNA and restriction of viral replication. Degraded via selective autophagy following interaction with IRGM. IRGM promotes RIGI recruitment to autophagosome membranes, promoting its SQSTM1/p62-dependent autophagic degradation. In terms of processing, (Microbial infection) Cleaved by the protease 3C of coxsackievirus B3, poliovirus and enterovirus 71 allowing the virus to disrupt the host type I interferon production. Post-translationally, (Microbial infection) Phosphorylated at Ser-8 by herpes simplex virus 1 protein US3 leading to inhibition of critical RIGI activation steps. In terms of tissue distribution, present in vascular smooth cells (at protein level).

Its subcellular location is the cytoplasm. The protein localises to the cell projection. It localises to the ruffle membrane. The protein resides in the cytoskeleton. It is found in the cell junction. Its subcellular location is the tight junction. It catalyses the reaction ATP + H2O = ADP + phosphate + H(+). Its function is as follows. Innate immune receptor that senses cytoplasmic viral nucleic acids and activates a downstream signaling cascade leading to the production of type I interferons and pro-inflammatory cytokines. Forms a ribonucleoprotein complex with viral RNAs on which it homooligomerizes to form filaments. The homooligomerization allows the recruitment of RNF135 an E3 ubiquitin-protein ligase that activates and amplifies the RIG-I-mediated antiviral signaling in an RNA length-dependent manner through ubiquitination-dependent and -independent mechanisms. Upon activation, associates with mitochondria antiviral signaling protein (MAVS/IPS1) that activates the IKK-related kinases TBK1 and IKBKE which in turn phosphorylate the interferon regulatory factors IRF3 and IRF7, activating transcription of antiviral immunological genes including the IFN-alpha and IFN-beta interferons. Ligands include 5'-triphosphorylated ssRNAs and dsRNAs but also short dsRNAs (&lt;1 kb in length). In addition to the 5'-triphosphate moiety, blunt-end base pairing at the 5'-end of the RNA is very essential. Overhangs at the non-triphosphorylated end of the dsRNA RNA have no major impact on its activity. A 3'overhang at the 5'triphosphate end decreases and any 5'overhang at the 5' triphosphate end abolishes its activity. Detects both positive and negative strand RNA viruses including members of the families Paramyxoviridae: Human respiratory syncytial virus and measles virus (MeV), Rhabdoviridae: vesicular stomatitis virus (VSV), Orthomyxoviridae: influenza A and B virus, Flaviviridae: Japanese encephalitis virus (JEV), hepatitis C virus (HCV), dengue virus (DENV) and west Nile virus (WNV). It also detects rotaviruses and reoviruses. Detects and binds to SARS-CoV-2 RNAs which is inhibited by m6A RNA modifications. Also involved in antiviral signaling in response to viruses containing a dsDNA genome such as Epstein-Barr virus (EBV). Detects dsRNA produced from non-self dsDNA by RNA polymerase III, such as Epstein-Barr virus-encoded RNAs (EBERs). May play important roles in granulocyte production and differentiation, bacterial phagocytosis and in the regulation of cell migration. In Homo sapiens (Human), this protein is Antiviral innate immune response receptor RIG-I.